The chain runs to 589 residues: Transcription factor atf-6 homolog (589 aa).

Basic and acidic residues predominate over residues 1–16 (MNFDNTVHESNFDDLL). The disordered stretch occupies residues 1 to 82 (MNFDNTVHES…SSPPLSCANF (82 aa)). Low complexity-rich tracts occupy residues 36–54 (GTDESQESTSSSSFGFSDQ) and 67–78 (GDSSSDSSPPLS). The bZIP domain occupies 250 to 299 (QNRKIRNRMYAQASRMRKKEADEHMKMNLQELLQENEILRTENAALKQRL). The segment at 252-275 (RKIRNRMYAQASRMRKKEADEHMK) is basic motif. The stretch at 271–305 (DEHMKMNLQELLQENEILRTENAALKQRLAFFEHE) forms a coiled coil. The interval 281-295 (LLQENEILRTENAAL) is leucine-zipper. The chain crosses the membrane as a helical span at residues 324-344 (IIAAGSVLMMFGLFAVISPFN).

The protein belongs to the bZIP family. ATF subfamily.

It is found in the nucleus. The protein resides in the membrane. Transcription factor. Plays a role in the unfolded protein response (UPR), perhaps mainly during constitutive endoplasmic reticulum (ER) stress, by activating transcription of genes involved in the UPR. Plays a role in modulating lifespan, acting by positively regulating expression of calcium-binding chaperone crt-1, thereby influencing ER calcium homeostasis. By activating the UPR pathway, confers adaptive protection to subsequent exposure to hypoxia. Involved in protection against proteotoxicity, probably acting via the UPR. Probably acts in the UPR in parallel with the ire-1-xbp-1 and pek-1 pathways. May be regulated by endopeptidase S2P-mediated proteolytic cleavage. The chain is Transcription factor atf-6 homolog from Caenorhabditis elegans.